The chain runs to 94 residues: Cytochrome c-551 (94 aa).

Residues 1–14 (MAFTAMTVAPSALA) form the signal peptide. The heme c site is built by Cys24, Cys27, His28, and Met73.

Post-translationally, binds 1 heme c group covalently per subunit.

In terms of biological role, efficiently couple electron transfer between the cytochrome bc1 complex and the photosynthetic reaction center. This chain is Cytochrome c-551, found in Allochromatium vinosum (strain ATCC 17899 / DSM 180 / NBRC 103801 / NCIMB 10441 / D) (Chromatium vinosum).